The following is a 349-amino-acid chain: Hydroxymethylglutaryl-CoA synthase (349 aa).

Asp-30 contacts (3S)-3-hydroxy-3-methylglutaryl-CoA. The Proton donor/acceptor role is filled by Glu-82. Cys-114 is a binding site for (3S)-3-hydroxy-3-methylglutaryl-CoA. Cys-114 acts as the Acyl-thioester intermediate in catalysis. Arg-203 provides a ligand contact to CoA. Residues Thr-205 and His-238 each contribute to the (3S)-3-hydroxy-3-methylglutaryl-CoA site. The active-site Proton donor/acceptor is His-238. Lys-243 contributes to the CoA binding site. The (3S)-3-hydroxy-3-methylglutaryl-CoA site is built by Lys-247, Asn-270, and Ser-300.

This sequence belongs to the thiolase-like superfamily. Archaeal HMG-CoA synthase family. Interacts with acetoacetyl-CoA thiolase that catalyzes the precedent step in the pathway and with a DUF35 protein. The acetoacetyl-CoA thiolase/HMG-CoA synthase complex channels the intermediate via a fused CoA-binding site, which allows for efficient coupling of the endergonic thiolase reaction with the exergonic HMGCS reaction.

It carries out the reaction acetoacetyl-CoA + acetyl-CoA + H2O = (3S)-3-hydroxy-3-methylglutaryl-CoA + CoA + H(+). The protein operates within metabolic intermediate biosynthesis; (R)-mevalonate biosynthesis; (R)-mevalonate from acetyl-CoA: step 2/3. Its function is as follows. Catalyzes the condensation of acetyl-CoA with acetoacetyl-CoA to form 3-hydroxy-3-methylglutaryl-CoA (HMG-CoA). Functions in the mevalonate (MVA) pathway leading to isopentenyl diphosphate (IPP), a key precursor for the biosynthesis of isoprenoid compounds that are building blocks of archaeal membrane lipids. The sequence is that of Hydroxymethylglutaryl-CoA synthase from Methanothermococcus thermolithotrophicus (Methanococcus thermolithotrophicus).